Here is a 499-residue protein sequence, read N- to C-terminus: Pleckstrin homology domain-containing family O member 2 (499 aa).

The span at 1–11 (MEEEGVKEGGQ) shows a compositional bias: basic and acidic residues. Residues 1–21 (MEEEGVKEGGQRPRSAQTADK) are disordered. The region spanning 18 to 119 (TADKAGWIKK…WIKALNEGIN (102 aa)) is the PH domain. Ser-167 carries the phosphoserine modification. The segment at 170–419 (LSRLDLDVPD…RRRQPGEQLH (250 aa)) is disordered. The span at 201–212 (RPPMPPAKPSPA) shows a compositional bias: pro residues. The segment covering 229–238 (SAPAPVPASS) has biased composition (low complexity). Ser-237 and Ser-238 each carry phosphoserine. A compositionally biased stretch (acidic residues) spans 246–258 (EDLETPVVEDSDS). Residue Ser-273 is modified to Phosphoserine. Phosphothreonine occurs at positions 298 and 311. Composition is skewed to low complexity over residues 329–349 (EASG…GPAE) and 367–386 (AAGP…TLPP). The residue at position 399 (Ser-399) is a Phosphoserine. Positions 416–492 (EQLHRAQLEV…LREKRRELVT (77 aa)) form a coiled coil.

The protein is Pleckstrin homology domain-containing family O member 2 (PLEKHO2) of Bos taurus (Bovine).